A 446-amino-acid chain; its full sequence is Trigger factor (446 aa).

The PPIase FKBP-type domain maps to 163-248 (GDIVTIDFKG…VRGIKRKKLA (86 aa)). Residues 423–446 (SKPVPPREQGAAGETAETAEATPA) form a disordered region. The span at 432–446 (GAAGETAETAEATPA) shows a compositional bias: low complexity.

It belongs to the FKBP-type PPIase family. Tig subfamily.

It localises to the cytoplasm. The enzyme catalyses [protein]-peptidylproline (omega=180) = [protein]-peptidylproline (omega=0). Involved in protein export. Acts as a chaperone by maintaining the newly synthesized protein in an open conformation. Functions as a peptidyl-prolyl cis-trans isomerase. The sequence is that of Trigger factor from Moorella thermoacetica (strain ATCC 39073 / JCM 9320).